The sequence spans 284 residues: 4-diphosphocytidyl-2-C-methyl-D-erythritol kinase (284 aa).

Lys-14 is an active-site residue. Residue 98 to 108 (PMGGGLGGGSS) participates in ATP binding. Asp-140 is an active-site residue.

Belongs to the GHMP kinase family. IspE subfamily.

It carries out the reaction 4-CDP-2-C-methyl-D-erythritol + ATP = 4-CDP-2-C-methyl-D-erythritol 2-phosphate + ADP + H(+). The protein operates within isoprenoid biosynthesis; isopentenyl diphosphate biosynthesis via DXP pathway; isopentenyl diphosphate from 1-deoxy-D-xylulose 5-phosphate: step 3/6. Its function is as follows. Catalyzes the phosphorylation of the position 2 hydroxy group of 4-diphosphocytidyl-2C-methyl-D-erythritol. In Shewanella putrefaciens (strain CN-32 / ATCC BAA-453), this protein is 4-diphosphocytidyl-2-C-methyl-D-erythritol kinase.